The following is a 291-amino-acid chain: Bifunctional protein FolD (291 aa).

NADP(+) contacts are provided by residues G166 to G168, I191, and I232.

This sequence belongs to the tetrahydrofolate dehydrogenase/cyclohydrolase family. In terms of assembly, homodimer.

It carries out the reaction (6R)-5,10-methylene-5,6,7,8-tetrahydrofolate + NADP(+) = (6R)-5,10-methenyltetrahydrofolate + NADPH. It catalyses the reaction (6R)-5,10-methenyltetrahydrofolate + H2O = (6R)-10-formyltetrahydrofolate + H(+). It participates in one-carbon metabolism; tetrahydrofolate interconversion. In terms of biological role, catalyzes the oxidation of 5,10-methylenetetrahydrofolate to 5,10-methenyltetrahydrofolate and then the hydrolysis of 5,10-methenyltetrahydrofolate to 10-formyltetrahydrofolate. In Aquifex aeolicus (strain VF5), this protein is Bifunctional protein FolD.